Reading from the N-terminus, the 137-residue chain is Gonadotropin subunit beta-1 (137 aa).

The signal sequence occupies residues 1 to 24 (MYCTHLRMLQLVVMATLWVTPVRA). 5 cysteine pairs are disulfide-bonded: Cys32–Cys78, Cys46–Cys93, Cys55–Cys108, Cys59–Cys110, and Cys113–Cys120. Asn36 carries an N-linked (GlcNAc...) asparagine glycan.

Belongs to the glycoprotein hormones subunit beta family. In terms of assembly, heterodimer of an alpha and a beta chain.

The protein resides in the secreted. Functionally, involved in gametogenesis and steroidogenesis. This Coregonus autumnalis (Arctic cisco) protein is Gonadotropin subunit beta-1 (cgba).